The following is a 189-amino-acid chain: Low affinity inorganic phosphate transporter 2 (189 aa).

Residues T1–R55 lie on the Cytoplasmic side of the membrane. A helical transmembrane segment spans residues H56–S76. The Extracellular portion of the chain corresponds to Q77–T111. Residues L112 to I132 traverse the membrane as a helical segment. The Cytoplasmic portion of the chain corresponds to G133 to R134. The chain crosses the membrane as a helical span at residues F135–P155. Residues Y156–R165 are Extracellular-facing. The chain crosses the membrane as a helical span at residues I166–T186. Residues T187–V189 lie on the Cytoplasmic side of the membrane.

Belongs to the major facilitator superfamily. Phosphate:H(+) symporter (TC 2.A.1.9) family.

It is found in the cell membrane. It carries out the reaction phosphate(in) + H(+)(in) = phosphate(out) + H(+)(out). Its function is as follows. Low-affinity transporter for external inorganic phosphate (Pi). The polypeptide is Low affinity inorganic phosphate transporter 2 (Petunia hybrida (Petunia)).